Here is a 328-residue protein sequence, read N- to C-terminus: Malate dehydrogenase (328 aa).

12–18 (GAAGQIA) provides a ligand contact to NAD(+). Substrate contacts are provided by Arg93 and Arg99. Residues Asn106, Gln113, and 130–132 (VGN) contribute to the NAD(+) site. Residues Asn132 and Arg163 each coordinate substrate. His188 acts as the Proton acceptor in catalysis.

This sequence belongs to the LDH/MDH superfamily. MDH type 2 family.

It catalyses the reaction (S)-malate + NAD(+) = oxaloacetate + NADH + H(+). Functionally, catalyzes the reversible oxidation of malate to oxaloacetate. In Burkholderia multivorans (strain ATCC 17616 / 249), this protein is Malate dehydrogenase.